The chain runs to 389 residues: S-adenosylmethionine synthase 2 (389 aa).

ATP is bound at residue histidine 17. Aspartate 19 is a Mg(2+) binding site. Glutamate 45 lines the K(+) pocket. L-methionine is bound by residues glutamate 58 and glutamine 102. The tract at residues 102–112 (QSADIAVGVDA) is flexible loop. Residues 166 to 168 (DSK), 231 to 232 (RF), aspartate 240, 246 to 247 (RK), alanine 263, and lysine 267 contribute to the ATP site. Aspartate 240 lines the L-methionine pocket. Position 271 (lysine 271) interacts with L-methionine.

This sequence belongs to the AdoMet synthase family. As to quaternary structure, homotetramer; dimer of dimers. Mg(2+) is required as a cofactor. The cofactor is K(+).

It localises to the cytoplasm. It catalyses the reaction L-methionine + ATP + H2O = S-adenosyl-L-methionine + phosphate + diphosphate. Its pathway is amino-acid biosynthesis; S-adenosyl-L-methionine biosynthesis; S-adenosyl-L-methionine from L-methionine: step 1/1. In terms of biological role, catalyzes the formation of S-adenosylmethionine (AdoMet) from methionine and ATP. The overall synthetic reaction is composed of two sequential steps, AdoMet formation and the subsequent tripolyphosphate hydrolysis which occurs prior to release of AdoMet from the enzyme. In Rhodospirillum rubrum (strain ATCC 11170 / ATH 1.1.1 / DSM 467 / LMG 4362 / NCIMB 8255 / S1), this protein is S-adenosylmethionine synthase 2.